The sequence spans 233 residues: 7-cyano-7-deazaguanine synthase (233 aa).

7-17 provides a ligand contact to ATP; the sequence is CSGGLDSVSLA. Zn(2+) contacts are provided by C185, C193, C196, and C199.

This sequence belongs to the QueC family. Zn(2+) is required as a cofactor.

The catalysed reaction is 7-carboxy-7-deazaguanine + NH4(+) + ATP = 7-cyano-7-deazaguanine + ADP + phosphate + H2O + H(+). The protein operates within purine metabolism; 7-cyano-7-deazaguanine biosynthesis. Its function is as follows. Catalyzes the ATP-dependent conversion of 7-carboxy-7-deazaguanine (CDG) to 7-cyano-7-deazaguanine (preQ(0)). The protein is 7-cyano-7-deazaguanine synthase of Paracoccus denitrificans (strain Pd 1222).